The chain runs to 206 residues: Ribosomal RNA small subunit methyltransferase G (206 aa).

S-adenosyl-L-methionine contacts are provided by residues G73, L78, 124-125 (VE), and R139.

It belongs to the methyltransferase superfamily. RNA methyltransferase RsmG family.

Its subcellular location is the cytoplasm. It catalyses the reaction guanosine(527) in 16S rRNA + S-adenosyl-L-methionine = N(7)-methylguanosine(527) in 16S rRNA + S-adenosyl-L-homocysteine. In terms of biological role, specifically methylates the N7 position of guanine in position 527 of 16S rRNA. This chain is Ribosomal RNA small subunit methyltransferase G, found in Idiomarina loihiensis (strain ATCC BAA-735 / DSM 15497 / L2-TR).